We begin with the raw amino-acid sequence, 562 residues long: Dihydroxy-acid dehydratase (562 aa).

Residue aspartate 78 participates in Mg(2+) binding. Position 119 (cysteine 119) interacts with [2Fe-2S] cluster. Positions 120 and 121 each coordinate Mg(2+). Lysine 121 carries the post-translational modification N6-carboxylysine. Residue cysteine 192 coordinates [2Fe-2S] cluster. Glutamate 450 lines the Mg(2+) pocket. The active-site Proton acceptor is the serine 476.

This sequence belongs to the IlvD/Edd family. As to quaternary structure, homodimer. [2Fe-2S] cluster serves as cofactor. Requires Mg(2+) as cofactor.

It catalyses the reaction (2R)-2,3-dihydroxy-3-methylbutanoate = 3-methyl-2-oxobutanoate + H2O. The catalysed reaction is (2R,3R)-2,3-dihydroxy-3-methylpentanoate = (S)-3-methyl-2-oxopentanoate + H2O. It functions in the pathway amino-acid biosynthesis; L-isoleucine biosynthesis; L-isoleucine from 2-oxobutanoate: step 3/4. It participates in amino-acid biosynthesis; L-valine biosynthesis; L-valine from pyruvate: step 3/4. Functions in the biosynthesis of branched-chain amino acids. Catalyzes the dehydration of (2R,3R)-2,3-dihydroxy-3-methylpentanoate (2,3-dihydroxy-3-methylvalerate) into 2-oxo-3-methylpentanoate (2-oxo-3-methylvalerate) and of (2R)-2,3-dihydroxy-3-methylbutanoate (2,3-dihydroxyisovalerate) into 2-oxo-3-methylbutanoate (2-oxoisovalerate), the penultimate precursor to L-isoleucine and L-valine, respectively. In Nautilia profundicola (strain ATCC BAA-1463 / DSM 18972 / AmH), this protein is Dihydroxy-acid dehydratase.